We begin with the raw amino-acid sequence, 588 residues long: Adenine deaminase (588 aa).

Belongs to the metallo-dependent hydrolases superfamily. Adenine deaminase family. The cofactor is Mn(2+).

The enzyme catalyses adenine + H2O + H(+) = hypoxanthine + NH4(+). The chain is Adenine deaminase from Desulforamulus reducens (strain ATCC BAA-1160 / DSM 100696 / MI-1) (Desulfotomaculum reducens).